A 324-amino-acid chain; its full sequence is Alkanal monooxygenase beta chain (324 aa).

This sequence belongs to the bacterial luciferase oxidoreductase family. Heterodimer of an alpha and a beta chain.

The catalysed reaction is a long-chain fatty aldehyde + FMNH2 + O2 = a long-chain fatty acid + hnu + FMN + H2O + 2 H(+). Functionally, light-emitting reaction in luminous bacteria. The specific role of the beta subunit is unknown, but it is absolutely required for bioluminescence activity. The chain is Alkanal monooxygenase beta chain (luxB) from Photorhabdus laumondii subsp. laumondii (strain DSM 15139 / CIP 105565 / TT01) (Photorhabdus luminescens subsp. laumondii).